Consider the following 658-residue polypeptide: MGNVQSEPSAGGGSRKEQASDRASDSRRTPLVEPEVTPSSPAMRLARGLGVWFPGSSGPPGLLIPPESQASSSTLPLTLELPSPVTPPPEEAAAAAVSTPPPPPVGTLLPAPSKWRKPTGTAVPRIRGLLEASHRGQGDPPSLRPLPPLPRQLTEKDPVLRAPAPPPTPLEPRKQLPPAPSTCDPQPPSRRITLASSATSPTESQVRHSSEGQAAGGAHGEGEMARSATSESGLSLLCKVTFKSGPHLSPTSSSGPLAAKASLGASGGGGLFASSGAISYAEVLKQGPQPPGATRPLGEGPRAAQETEGGDGDGEGCSGPPSVPTPLARALPPPPYTTFPGSKPKFDWVSPPDGTERHFRFNGAVGGIGAPRRRTTTLSGPWGSPPPRSGQTHPSSGPRRPTPALLAPPMFIFPAPNNGEPVRPVPPSPQQIPPLPPPPPTPPATPPPAPPPTPQPPALPRTPILVARPPTPGPGHLESALAPTPPSTLSPTAAAEQAPAPTPAPVTSQVPATTTAELSPPMPQPKIRTRRNKGPRAARGVIREEGTSGDGPREPNMAPVTDSSSGGGGGGSNGTSTAGASNKGTARHWPPFEVLNSCPCKCYCRHQRRHRRLPRNVSAWLSTPTNHLSEPPWVATVKLAGSLVAGLEHYDLQATHST.

2 disordered regions span residues 1 to 268 (MGNV…ASGG) and 285 to 584 (KQGP…SNKG). Residues 14-30 (SRKEQASDRASDSRRTP) show a composition bias toward basic and acidic residues. Positions 54–83 (PGSSGPPGLLIPPESQASSSTLPLTLELPS) are enriched in low complexity. Residues 127-491 (RGLLEASHRG…APTPPSTLSP (365 aa)) form an interaction with GGNBP1 region. The segment covering 163-188 (PAPPPTPLEPRKQLPPAPSTCDPQPP) has biased composition (pro residues). Residues 194–204 (LASSATSPTES) are compositionally biased toward polar residues. Positions 252-264 (SSSGPLAAKASLG) are enriched in low complexity. Ser-384 is modified (phosphoserine). Low complexity predominate over residues 398–409 (PRRPTPALLAPP). Pro residues predominate over residues 423–460 (RPVPPSPQQIPPLPPPPPTPPATPPPAPPPTPQPPALP). Low complexity predominate over residues 489–516 (LSPTAAAEQAPAPTPAPVTSQVPATTTA). The interactions with ZNF403/GGNBP2 and OAZ3 stretch occupies residues 496 to 658 (EQAPAPTPAP…HYDLQATHST (163 aa)). The span at 527 to 536 (IRTRRNKGPR) shows a compositional bias: basic residues.

As to quaternary structure, interacts with FANCL, GGNBP1 and ZNF403/GGNBP2.

Functionally, may be involved in spermatogenesis. The polypeptide is Gametogenetin (Ggn) (Rattus norvegicus (Rat)).